The sequence spans 1399 residues: MKDLLNLLKNQGQIEEFDAIKIALASPEMIRSWSFGEVKKPETINYRTFKPERDGLFCAKIFGPVKDYECLCGKYKRLKHRGVICEKCGVEVALAKVRRERMAHIELASPVAHIWFLKSLPSRIGLLLDMTLRDIERVLYFESYVVIDPGMTTLEKGQLLNDEQYFEALEEFGDDFDARMGAEAVRELLIQIDLEHEIGRLREEIPQTNSETKIKKLSKRLKLMEAFHGSGNLPEWMILTVLPVLPPDLRPLVPLDGGRFATSDLNDLYRRVINRNNRLKRLLDLSAPDIIVRNEKRMLQEAVDALLDNGRRGRAITGSNKRPLKSLADMIKGKQGRFRQNLLGKRVDYSGRSVITVGPTLRLHQCGLPKKMALELFKPFIFGKLEMRGMATTIKAAKKMVERELPEVWDVLAEVIREHPVLLNRAPTLHRLGIQAFEPVLIEGKAIQLHPLVCAAYNADFDGDQMAVHVPLTLEAQLEARALMMSTNNILSPANGEPIIVPSQDVVLGLYYMTREAINAKGEGRVFADLQEVDRVFRAGEASLHARVKVRINETIKDRDGSITKNTRIVDTTVGRALLFQIVPEGMSFDVVNQPMKKKAISKLINLCYRTVGLKDTVIFADQLMYTGFAYSTISGVSIGVNDFVIPDEKARIIDAATEEVKEIESQYASGLVTQGEKYNKVIDLWSKANDEVSKAMMANLSKEKVIDREGNEAEQDSFNSMYMMADSGARGSAAQIRQLAGMRGLMAKPDGSIIETPITANFREGLNVLQYFISTHGARKGLADTALKTANSGYLTRRLVDVAQDLVVTEIDCGTEQGLHMTPHIEGGDVVEPLGERVLGRVIARDVLKPGTDDVLVPAGTLIDEQWVDFIELNSIDEVIVRSPISCETRYGICAKCYGRDLARGHQVNIGEAVGVIAAQSIGEPGTQLTMRTFHIGGAASRTSAVDNVLVKNGGTIRLHNLKHVERADGALVAVSRSGELAVADDFGRERERYKLPYGAVISVKEGDKVDAGAVVAKWDPHTHPIVTEMKGVVTFVGMEENITIKRQTDELTGLTNIEVMDPKDRPAAGKDIRPAIKMVDANGKELLLPGTDVPAQYFLPANALVGVADGAEINVGDVIARIPQETSKTRDITGGLPRVADLFEARRPKEPSILAEISGTISFGKETKGKRRLVITPTDGSDPYEELIPKWRHLNVFEGEQVNKGEVISDGPSNPHDILRLLGVSALARYIVNEIQDVYRLQGVKINDKHIETILRQMLRKVEITESGDSSFIKGDQMELTQVLEENERLSAEDKFVAKYVRVLLGITKASLSTESFISAASFQETTRVLTEAAVTGKRDYLRGLKENVVVGRLIPAGTGLAYHSERKRKRDAEKPVRVSADEVEAALTEALNSSGN.

Cysteine 70, cysteine 72, cysteine 85, and cysteine 88 together coordinate Zn(2+). The Mg(2+) site is built by aspartate 460, aspartate 462, and aspartate 464. Zn(2+)-binding residues include cysteine 814, cysteine 888, cysteine 895, and cysteine 898.

This sequence belongs to the RNA polymerase beta' chain family. In terms of assembly, the RNAP catalytic core consists of 2 alpha, 1 beta, 1 beta' and 1 omega subunit. When a sigma factor is associated with the core the holoenzyme is formed, which can initiate transcription. It depends on Mg(2+) as a cofactor. The cofactor is Zn(2+).

It carries out the reaction RNA(n) + a ribonucleoside 5'-triphosphate = RNA(n+1) + diphosphate. Its function is as follows. DNA-dependent RNA polymerase catalyzes the transcription of DNA into RNA using the four ribonucleoside triphosphates as substrates. The sequence is that of DNA-directed RNA polymerase subunit beta' from Stutzerimonas stutzeri (strain A1501) (Pseudomonas stutzeri).